The following is a 224-amino-acid chain: Octanoyl-[acyl-carrier-protein]:protein N-octanoyltransferase LIPT2, mitochondrial (224 aa).

A BPL/LPL catalytic domain is found at 37–217 (SNIPNTLLLC…AFTEQFNCTL (181 aa)). Substrate contacts are provided by residues 81–88 (RGGLITFH), 147–149 (AIG), and 160–162 (GLA). Cys178 functions as the Acyl-thioester intermediate in the catalytic mechanism.

This sequence belongs to the LipB family.

It is found in the mitochondrion. It catalyses the reaction octanoyl-[ACP] + L-lysyl-[protein] = N(6)-octanoyl-L-lysyl-[protein] + holo-[ACP] + H(+). It functions in the pathway protein modification; protein lipoylation via endogenous pathway; protein N(6)-(lipoyl)lysine from octanoyl-[acyl-carrier-protein]: step 1/2. Functionally, catalyzes the transfer of endogenously produced octanoic acid from octanoyl-acyl-carrier-protein (octanoyl-ACP) onto the lipoyl domains of lipoate-dependent enzymes such as the protein H of the glycine cleavage system (GCSH). Lipoyl-ACP can also act as a substrate although octanoyl-ACP is likely to be the physiological substrate. In Danio rerio (Zebrafish), this protein is Octanoyl-[acyl-carrier-protein]:protein N-octanoyltransferase LIPT2, mitochondrial (lipt2).